Here is a 140-residue protein sequence, read N- to C-terminus: METLTAISRWLAKQHVVTWCVQQEGELWCANAFYLFDAQKVAFYILTEEKTRHAQMSGPQAAIAGTVNGQPKTVALIRGVQFKGEIRRLEGEESDLARKAYNRRFPVARMLSAPVWEIRLDEIKFTDNTLGFGKKLVWQR.

Belongs to the UPF0306 family.

The sequence is that of UPF0306 protein YhbP from Escherichia coli O6:H1 (strain CFT073 / ATCC 700928 / UPEC).